Reading from the N-terminus, the 405-residue chain is Multidrug resistance protein MdtA (405 aa).

A signal peptide spans 1–22 (MKTPRRFPLIALTVAAVLTAAA). Residues 35-52 (VQNRQGTEQQRASNSQGS) show a composition bias toward polar residues. Positions 35 to 62 (VQNRQGTEQQRASNSQGSAKRAGNAPPV) are disordered.

Belongs to the membrane fusion protein (MFP) (TC 8.A.1) family. In terms of assembly, part of a tripartite efflux system composed of MdtA, MdtB and MdtC.

Its subcellular location is the cell inner membrane. This is Multidrug resistance protein MdtA from Erwinia amylovora (strain ATCC 49946 / CCPPB 0273 / Ea273 / 27-3).